Consider the following 444-residue polypeptide: Methylenetetrahydrofolate--tRNA-(uracil-5-)-methyltransferase TrmFO (444 aa).

10–15 (GAGLAG) is an FAD binding site.

Belongs to the MnmG family. TrmFO subfamily. The cofactor is FAD.

The protein resides in the cytoplasm. The enzyme catalyses uridine(54) in tRNA + (6R)-5,10-methylene-5,6,7,8-tetrahydrofolate + NADH + H(+) = 5-methyluridine(54) in tRNA + (6S)-5,6,7,8-tetrahydrofolate + NAD(+). It catalyses the reaction uridine(54) in tRNA + (6R)-5,10-methylene-5,6,7,8-tetrahydrofolate + NADPH + H(+) = 5-methyluridine(54) in tRNA + (6S)-5,6,7,8-tetrahydrofolate + NADP(+). Its function is as follows. Catalyzes the folate-dependent formation of 5-methyl-uridine at position 54 (M-5-U54) in all tRNAs. This is Methylenetetrahydrofolate--tRNA-(uracil-5-)-methyltransferase TrmFO from Streptococcus pneumoniae (strain Taiwan19F-14).